The primary structure comprises 401 residues: MARPDLHGRISSLRKLHVAQDRVRVRRQVGRRDGVRLEIDGRWLTGFCSNDYLGLSQQFEVIAALQDAAARDGAGATASHLICGHHTAHETLEREIAEWLGYPSALLFGNGFIANLAVQQALLSEEDDVCVQDRLNHASLLDATRLAGCRLRRYPHLDVEGAMRQLKGAPEGAAMLASDAVFSMDGDVAPLRALSLVARMQDALFYVDDAHGVGVLGPQGRGCVADAGLGVAEVPLQLVTLGKALGGYGAVVVGDDALVRHLAETARPYIYTTALPPAQVAATLAAVRLARRDDWRRARLVELIAAFRDGARKHGFELMASDTPIQPLLCGEEATVMAMSAALEQAGFMVGAIRPPTVPEGKARLRVTLSALHTPQQVQALIDAIVQARDVVSRQPLRASA.

A substrate-binding site is contributed by Arg24. 111–112 (GF) provides a ligand contact to pyridoxal 5'-phosphate. Residue His137 coordinates substrate. Pyridoxal 5'-phosphate-binding residues include Ser183, His211, and Thr240. Position 243 is an N6-(pyridoxal phosphate)lysine (Lys243). Thr357 provides a ligand contact to substrate.

This sequence belongs to the class-II pyridoxal-phosphate-dependent aminotransferase family. BioF subfamily. As to quaternary structure, homodimer. Pyridoxal 5'-phosphate serves as cofactor.

The enzyme catalyses 6-carboxyhexanoyl-[ACP] + L-alanine + H(+) = (8S)-8-amino-7-oxononanoate + holo-[ACP] + CO2. The protein operates within cofactor biosynthesis; biotin biosynthesis. Catalyzes the decarboxylative condensation of pimeloyl-[acyl-carrier protein] and L-alanine to produce 8-amino-7-oxononanoate (AON), [acyl-carrier protein], and carbon dioxide. This chain is 8-amino-7-oxononanoate synthase, found in Xanthomonas oryzae pv. oryzae (strain MAFF 311018).